Reading from the N-terminus, the 295-residue chain is MSYKSGFVTIIGRPNVGKSTLMNQIIGEKIAIMSDKPQTTRNKIQSVYSQEDFQIVFLDTPGIHKPKHKLGEYMVKVARDTLKEVDVVLFLVDEGQKIGPGDRFIMEQLKDIKTPMFLIINKIDKMNQEILNEVCGLFEETGLFQRIIPISALEGANIDTLIKQIVSFLPEGPQYFPSDMITDQPERLLVAEIVREKLLHYLDQEIPHGIAVETSMMKQRPNQDIVDIQATIYCEKKSHKGIIIGKGGRKLKGVGKSARQDIEKLLGSKVFLELWVKVNEDWRNQSRILKSLGYE.

The Era-type G domain maps to 4 to 171 (KSGFVTIIGR…IKQIVSFLPE (168 aa)). The interval 12–19 (GRPNVGKS) is G1. Residue 12–19 (GRPNVGKS) coordinates GTP. The tract at residues 38-42 (QTTRN) is G2. The segment at 59 to 62 (DTPG) is G3. GTP contacts are provided by residues 59 to 63 (DTPGI) and 121 to 124 (NKID). The G4 stretch occupies residues 121-124 (NKID). Residues 150–152 (ISA) are G5. Residues 202-280 (LDQEIPHGIA…FLELWVKVNE (79 aa)) form the KH type-2 domain.

Belongs to the TRAFAC class TrmE-Era-EngA-EngB-Septin-like GTPase superfamily. Era GTPase family. As to quaternary structure, monomer.

The protein resides in the cytoplasm. It is found in the cell membrane. Functionally, an essential GTPase that binds both GDP and GTP, with rapid nucleotide exchange. Plays a role in 16S rRNA processing and 30S ribosomal subunit biogenesis and possibly also in cell cycle regulation and energy metabolism. The polypeptide is GTPase Era (Alkaliphilus metalliredigens (strain QYMF)).